The primary structure comprises 147 residues: Phage-like element PBSX protein XkdM (147 aa).

The protein to B.subtilis YqbM.

This is Phage-like element PBSX protein XkdM (xkdM) from Bacillus subtilis (strain 168).